We begin with the raw amino-acid sequence, 436 residues long: MANIFEVPNPGNDLLEKADKVRLASIKISQTENIDRIKALNFMADCLEKNSKEILEANSADYSSAEKKGISRALLSRLKLSKAKLNSGIEGVRKVGELADPVNQIQIKRELSNGLILERKTVPIGVLGVIFESRPDAVMQISSLAIRSGNGVILKGGSEANLTNTSIVKALQEGLDESGLDKNAICLLTSRKDSMAMLNLEKYINLIIPRGSNELVKFIQENTRIPVLGHADGICHLFIDIEANLEMALSVALDSKIQYPAACNAIETLLVHKDIAPAFLEKAIPLFNSNDVKLIGDRKSVELGLEHEASAEDWQTEYLDLILSIKIVDDLDEAIIHIQKYSSKHTDGIITENLKTANRFMNVVDSAGVFHNCSTRFADGFRYGFGAEVGISTQTLPPRGPVGLEGLVTYKYFLKGDGNIVDDFSLGKAIYTHKDL.

It belongs to the gamma-glutamyl phosphate reductase family.

It localises to the cytoplasm. The enzyme catalyses L-glutamate 5-semialdehyde + phosphate + NADP(+) = L-glutamyl 5-phosphate + NADPH + H(+). It functions in the pathway amino-acid biosynthesis; L-proline biosynthesis; L-glutamate 5-semialdehyde from L-glutamate: step 2/2. In terms of biological role, catalyzes the NADPH-dependent reduction of L-glutamate 5-phosphate into L-glutamate 5-semialdehyde and phosphate. The product spontaneously undergoes cyclization to form 1-pyrroline-5-carboxylate. In Prochlorococcus marinus (strain MIT 9301), this protein is Gamma-glutamyl phosphate reductase.